Here is a 195-residue protein sequence, read N- to C-terminus: UMP-CMP kinase (195 aa).

Position 17-22 (17-22) interacts with ATP; that stretch reads GSGKGT. Positions 37 to 66 are NMP; sequence SAGDLLRQEQQSGSKDGEMIATMIKNGEIV. Residues R43, 64-66, and 91-94 each bind a ribonucleoside 5'-phosphate; these read EIV and GFPR. N98 provides a ligand contact to CMP. The LID stretch occupies residues 131-141; sequence KRGESSGRSDD. R132 is an ATP binding site. A ribonucleoside 5'-phosphate contacts are provided by R138 and R149. R177 lines the ATP pocket.

Belongs to the adenylate kinase family. UMP-CMP kinase subfamily. In terms of assembly, monomer. Mg(2+) serves as cofactor.

Its subcellular location is the cytoplasm. It is found in the nucleus. It carries out the reaction CMP + ATP = CDP + ADP. The catalysed reaction is dCMP + ATP = dCDP + ADP. The enzyme catalyses UMP + ATP = UDP + ADP. Its function is as follows. Catalyzes the phosphorylation of pyrimidine nucleoside monophosphates at the expense of ATP. Plays an important role in de novo pyrimidine nucleotide biosynthesis. Has preference for UMP and CMP as phosphate acceptors. The sequence is that of UMP-CMP kinase from Dictyostelium discoideum (Social amoeba).